Here is a 177-residue protein sequence, read N- to C-terminus: Large ribosomal subunit protein uL6 (177 aa).

It belongs to the universal ribosomal protein uL6 family. As to quaternary structure, part of the 50S ribosomal subunit.

This protein binds to the 23S rRNA, and is important in its secondary structure. It is located near the subunit interface in the base of the L7/L12 stalk, and near the tRNA binding site of the peptidyltransferase center. The protein is Large ribosomal subunit protein uL6 of Herminiimonas arsenicoxydans.